Consider the following 78-residue polypeptide: Protein FAM240B (78 aa).

This sequence belongs to the FAM240 family.

The chain is Protein FAM240B from Homo sapiens (Human).